The chain runs to 257 residues: Spermidine/putrescine transport system permease protein PotC (257 aa).

The Cytoplasmic segment spans residues 1 to 7 (MSRFFLR). The helical transmembrane segment at 8 to 27 (NAFMFVVYAYLYIPIIILVT) threads the bilayer. Residues 28–65 (NSFNKDRYGLSWKGFSWNWYERLFNNDTLIQAAIHSVT) lie on the Periplasmic side of the membrane. Residues 60–248 (AIHSVTIAFF…VLSLALVVLS (189 aa)) enclose the ABC transmembrane type-1 domain. A helical membrane pass occupies residues 66–85 (IAFFAATLATIVGGLTAIAL). The Cytoplasmic portion of the chain corresponds to 86–100 (YRYRFRGKQAVSGML). The chain crosses the membrane as a helical span at residues 101–120 (FIVMMSPDIVMAVSLLALFM). Topologically, residues 121–128 (VVGISLGF) are periplasmic. The chain crosses the membrane as a helical span at residues 129 to 148 (WSLLLAHVTFCLPYVTVTIF). The Cytoplasmic portion of the chain corresponds to 149–176 (SRLNGFDSRMLEAAKDLGASEVTILRKI). A helical membrane pass occupies residues 177–196 (ILPLALPAVVSGWLLSFTIS). Residues 197 to 231 (LDDVVVSSFVSGVSYEILPLRIFSLVKTGVTPEVN) are Periplasmic-facing. Residues 232–251 (ALATIMIVLSLALVVLSQLI) traverse the membrane as a helical segment. At 252 to 257 (TRKNNH) the chain is on the cytoplasmic side.

It belongs to the binding-protein-dependent transport system permease family. CysTW subfamily.

The protein resides in the cell inner membrane. Required for the activity of the bacterial periplasmic transport system of putrescine and spermidine. This is Spermidine/putrescine transport system permease protein PotC (potC) from Haemophilus influenzae (strain ATCC 51907 / DSM 11121 / KW20 / Rd).